The sequence spans 216 residues: Protein GrpE (216 aa).

Disordered stretches follow at residues 1–45 (MTEE…LDPT) and 185–216 (RVAV…TEEV). The span at 205–216 (TDDEESGGTEEV) shows a compositional bias: acidic residues.

Belongs to the GrpE family. In terms of assembly, homodimer.

It localises to the cytoplasm. In terms of biological role, participates actively in the response to hyperosmotic and heat shock by preventing the aggregation of stress-denatured proteins, in association with DnaK and GrpE. It is the nucleotide exchange factor for DnaK and may function as a thermosensor. Unfolded proteins bind initially to DnaJ; upon interaction with the DnaJ-bound protein, DnaK hydrolyzes its bound ATP, resulting in the formation of a stable complex. GrpE releases ADP from DnaK; ATP binding to DnaK triggers the release of the substrate protein, thus completing the reaction cycle. Several rounds of ATP-dependent interactions between DnaJ, DnaK and GrpE are required for fully efficient folding. In Streptomyces griseus subsp. griseus (strain JCM 4626 / CBS 651.72 / NBRC 13350 / KCC S-0626 / ISP 5235), this protein is Protein GrpE.